The primary structure comprises 1046 residues: Suppressor of Mek1 (1046 aa).

The 101-residue stretch at 1–101 (MEPLRKRVKV…QDIWENILQY (101 aa)) folds into the WH1 domain. A disordered region spans residues 626–1046 (FESPETSCNN…SSPTPSELHV (421 aa)). Over residues 665–689 (IDEEEEEAYFNRDDDSEDSDDEDEL) the composition is skewed to acidic residues. A compositionally biased stretch (low complexity) spans 695–713 (NNNNNNNNNNKQICTNNEN). Residues 714 to 727 (NMEKNDDNIEKDNE) show a composition bias toward basic and acidic residues. Positions 743–752 (YEDEDDEDDE) are enriched in acidic residues. Residues 753-783 (INKSVESDDIVEKHEIIDKNEKKDEIMKENN) are compositionally biased toward basic and acidic residues. A compositionally biased stretch (acidic residues) spans 784 to 803 (DSDNDDNDNNDNDNDNDNNS). A compositionally biased stretch (low complexity) spans 804–820 (DIENKNHLNNNGNNENN). Composition is skewed to basic and acidic residues over residues 826–855 (VQDK…KENL) and 862–876 (EKVK…KKEN). Low complexity predominate over residues 889–905 (SNNSNNNNNNNNNNSNN). Over residues 909 to 935 (GDNRKTTPKRKLDYEKNESVVSKKIDK) the composition is skewed to basic and acidic residues. The span at 958-995 (NNNNSNNNNNNNNNNNNNNNNNNNNNNNNNNNNNNNQN) shows a compositional bias: low complexity. Positions 996-1011 (DENELSSASEEEEEQL) are enriched in acidic residues. The Nuclear localization signal signature appears at 1003–1022 (ASEEEEEQLENGKHIKKFKR). Residues 1028-1038 (NNSSNNSNNSS) show a composition bias toward low complexity.

The protein belongs to the SMEK family. As to quaternary structure, interacts with ppp4c.

It is found in the cytoplasm. The protein localises to the cell cortex. Its subcellular location is the nucleus. Functionally, suppresses MEK1 null cell polarity, chemotaxis, and gene expression defects. Required for proper cytokinesis during vegetative growth, timely exit from the mound stage during development, and myosin II assembly. May be a regulatory subunit of serine/threonine-protein phosphatase 4 (PP4) and may control localization of PP4 to the nucleus. Involved in the regulation of some ppp4c functions, such as developmental progression, chemotaxis, expression of stress response genes and cell movement. The polypeptide is Suppressor of Mek1 (smkA) (Dictyostelium discoideum (Social amoeba)).